We begin with the raw amino-acid sequence, 678 residues long: Probable E3 ubiquitin ligase complex SCF subunit sconB (678 aa).

Positions 1–52 are disordered; that stretch reads MSTEDNHDSQILTARHRSDASEQSFKSLFGGPSSEDGKETEPDTHDHNHSFS. Residues 35–49 are compositionally biased toward basic and acidic residues; the sequence is EDGKETEPDTHDHNH. Residues 178-224 enclose the F-box domain; that stretch reads IDFITALPPEIAFKILCYLDTTSLCKASQVSRGWRALADDDVVWHRM. A disordered region spans residues 266–287; the sequence is VVGPRSPDASAESPPSGKRKLE. WD repeat units lie at residues 347–375, 387–415, 427–455, 466–496, 508–543, 553–595, 607–635, and 647–675; these read GHTNGVMCLQFEDNILATGSYDTTIKIWD, GHESGIRCLQFDDTKLISGSMDRTIKVWN, GHRGGVIGLHFDASILASGSVDKTVKIWN, GHTDWVNAVRVDTSSRTVFSASDDCTVRLWD, GHVGQVQQVVPLPREFEFEEHDAECENDDLSTTSGD, MGLE…RLWE, GHLEGVWALGADTLRIVSGAEDRMIKIWD, and GHSGPVTCIGLGDSRFATGSEDCEVRMYS.

It belongs to the WD repeat MET30/SCONB/SCON-2 family. As to quaternary structure, component of the SCF(sconB) E3 ubiquitin ligase complex.

The protein operates within protein modification; protein ubiquitination. In terms of biological role, component of the SCF(sconB) E3 ubiquitin ligase complex involved in the regulation of sulfur metabolite repression, probably by mediating the inactivation or degradation of the metR transcription factor. The protein is Probable E3 ubiquitin ligase complex SCF subunit sconB (sconB) of Emericella nidulans (strain FGSC A4 / ATCC 38163 / CBS 112.46 / NRRL 194 / M139) (Aspergillus nidulans).